The following is a 241-amino-acid chain: Proteasome subunit alpha (241 aa).

The protein belongs to the peptidase T1A family. The 20S proteasome core is composed of 14 alpha and 14 beta subunits that assemble into four stacked heptameric rings, resulting in a barrel-shaped structure. The two inner rings, each composed of seven catalytic beta subunits, are sandwiched by two outer rings, each composed of seven alpha subunits. The catalytic chamber with the active sites is on the inside of the barrel. Has a gated structure, the ends of the cylinder being occluded by the N-termini of the alpha-subunits. Is capped at one or both ends by the proteasome regulatory ATPase, PAN.

The protein resides in the cytoplasm. Its activity is regulated as follows. The formation of the proteasomal ATPase PAN-20S proteasome complex, via the docking of the C-termini of PAN into the intersubunit pockets in the alpha-rings, triggers opening of the gate for substrate entry. Interconversion between the open-gate and close-gate conformations leads to a dynamic regulation of the 20S proteasome proteolysis activity. Functionally, component of the proteasome core, a large protease complex with broad specificity involved in protein degradation. This chain is Proteasome subunit alpha, found in Saccharolobus solfataricus (strain ATCC 35092 / DSM 1617 / JCM 11322 / P2) (Sulfolobus solfataricus).